The sequence spans 239 residues: UDP-2,3-diacylglucosamine hydrolase (239 aa).

Aspartate 8, histidine 10, aspartate 41, asparagine 79, and histidine 114 together coordinate Mn(2+). 79–80 is a substrate binding site; sequence NR. Residues aspartate 122, serine 160, asparagine 164, lysine 167, and histidine 195 each contribute to the substrate site. Mn(2+) contacts are provided by histidine 195 and histidine 197.

The protein belongs to the LpxH family. Mn(2+) is required as a cofactor.

Its subcellular location is the cell inner membrane. It carries out the reaction UDP-2-N,3-O-bis[(3R)-3-hydroxytetradecanoyl]-alpha-D-glucosamine + H2O = 2-N,3-O-bis[(3R)-3-hydroxytetradecanoyl]-alpha-D-glucosaminyl 1-phosphate + UMP + 2 H(+). Its pathway is glycolipid biosynthesis; lipid IV(A) biosynthesis; lipid IV(A) from (3R)-3-hydroxytetradecanoyl-[acyl-carrier-protein] and UDP-N-acetyl-alpha-D-glucosamine: step 4/6. Hydrolyzes the pyrophosphate bond of UDP-2,3-diacylglucosamine to yield 2,3-diacylglucosamine 1-phosphate (lipid X) and UMP by catalyzing the attack of water at the alpha-P atom. Involved in the biosynthesis of lipid A, a phosphorylated glycolipid that anchors the lipopolysaccharide to the outer membrane of the cell. The chain is UDP-2,3-diacylglucosamine hydrolase from Sodalis glossinidius (strain morsitans).